Consider the following 492-residue polypeptide: 3-octaprenyl-4-hydroxybenzoate carboxy-lyase (492 aa).

A Mn(2+)-binding site is contributed by Asn177. Residues 180 to 182, 194 to 196, and 199 to 200 contribute to the prenylated FMN site; these read IYR, RWL, and RG. Glu243 is a Mn(2+) binding site. Asp292 serves as the catalytic Proton donor.

This sequence belongs to the UbiD family. In terms of assembly, homohexamer. It depends on prenylated FMN as a cofactor. Mn(2+) is required as a cofactor.

It is found in the cell membrane. The catalysed reaction is a 4-hydroxy-3-(all-trans-polyprenyl)benzoate + H(+) = a 2-(all-trans-polyprenyl)phenol + CO2. It participates in cofactor biosynthesis; ubiquinone biosynthesis. In terms of biological role, catalyzes the decarboxylation of 3-octaprenyl-4-hydroxy benzoate to 2-octaprenylphenol, an intermediate step in ubiquinone biosynthesis. The polypeptide is 3-octaprenyl-4-hydroxybenzoate carboxy-lyase (Neisseria meningitidis serogroup C / serotype 2a (strain ATCC 700532 / DSM 15464 / FAM18)).